The sequence spans 105 residues: Large ribosomal subunit protein eL36 (105 aa).

Lysine 62 carries the post-translational modification N6-acetyllysine.

This sequence belongs to the eukaryotic ribosomal protein eL36 family. As to quaternary structure, component of the large ribosomal subunit.

Its subcellular location is the cytoplasm. The protein resides in the cytosol. Component of the large ribosomal subunit. The ribosome is a large ribonucleoprotein complex responsible for the synthesis of proteins in the cell. The protein is Large ribosomal subunit protein eL36 (Rpl36) of Rattus norvegicus (Rat).